The following is a 687-amino-acid chain: Glycine--tRNA ligase beta subunit (687 aa).

Belongs to the class-II aminoacyl-tRNA synthetase family. Tetramer of two alpha and two beta subunits.

The protein localises to the cytoplasm. The catalysed reaction is tRNA(Gly) + glycine + ATP = glycyl-tRNA(Gly) + AMP + diphosphate. In Neisseria meningitidis serogroup C (strain 053442), this protein is Glycine--tRNA ligase beta subunit.